The sequence spans 424 residues: CinA-like protein (424 aa).

This sequence belongs to the CinA family.

The chain is CinA-like protein from Shewanella amazonensis (strain ATCC BAA-1098 / SB2B).